A 180-amino-acid polypeptide reads, in one-letter code: Cytidylate kinase (180 aa).

7 to 15 is a binding site for ATP; the sequence is GPPGSGTTT.

The protein belongs to the cytidylate kinase family. Type 2 subfamily.

Its subcellular location is the cytoplasm. The catalysed reaction is CMP + ATP = CDP + ADP. The enzyme catalyses dCMP + ATP = dCDP + ADP. The chain is Cytidylate kinase (cmk) from Archaeoglobus fulgidus (strain ATCC 49558 / DSM 4304 / JCM 9628 / NBRC 100126 / VC-16).